The sequence spans 388 residues: S-adenosylmethionine synthase (388 aa).

His16 provides a ligand contact to ATP. Asp18 provides a ligand contact to Mg(2+). A K(+)-binding site is contributed by Glu44. Residues Glu57 and Gln100 each contribute to the L-methionine site. The segment at 100–110 (QSPEIAQGVDR) is flexible loop. ATP contacts are provided by residues 165–167 (DAK), 231–232 (KF), Asp240, 246–247 (RK), Ala263, and Lys267. Asp240 contacts L-methionine. Lys271 contributes to the L-methionine binding site.

It belongs to the AdoMet synthase family. Homotetramer; dimer of dimers. Mg(2+) is required as a cofactor. K(+) serves as cofactor.

Its subcellular location is the cytoplasm. The catalysed reaction is L-methionine + ATP + H2O = S-adenosyl-L-methionine + phosphate + diphosphate. Its pathway is amino-acid biosynthesis; S-adenosyl-L-methionine biosynthesis; S-adenosyl-L-methionine from L-methionine: step 1/1. In terms of biological role, catalyzes the formation of S-adenosylmethionine (AdoMet) from methionine and ATP. The overall synthetic reaction is composed of two sequential steps, AdoMet formation and the subsequent tripolyphosphate hydrolysis which occurs prior to release of AdoMet from the enzyme. The polypeptide is S-adenosylmethionine synthase (Psychrobacter arcticus (strain DSM 17307 / VKM B-2377 / 273-4)).